We begin with the raw amino-acid sequence, 85 residues long: MDPKKIARINELAKKKKTEGLTAEEKVEQAKLREEYIEGYRRSVRHHIEGIKIVDEDGNDVTPEKLRQVQREKGLHGRSLDDPES.

The interval 58 to 85 is disordered; it reads GNDVTPEKLRQVQREKGLHGRSLDDPES. The span at 62–85 shows a compositional bias: basic and acidic residues; that stretch reads TPEKLRQVQREKGLHGRSLDDPES.

This sequence belongs to the UPF0291 family.

It localises to the cytoplasm. This chain is UPF0291 protein SSA_1878, found in Streptococcus sanguinis (strain SK36).